The primary structure comprises 242 residues: Biosynthetic peptidoglycan transglycosylase (242 aa).

A helical transmembrane segment spans residues 18-38 (VIMAVLCIAILYQLWMFSLVV).

It belongs to the glycosyltransferase 51 family.

It localises to the cell inner membrane. It catalyses the reaction [GlcNAc-(1-&gt;4)-Mur2Ac(oyl-L-Ala-gamma-D-Glu-L-Lys-D-Ala-D-Ala)](n)-di-trans,octa-cis-undecaprenyl diphosphate + beta-D-GlcNAc-(1-&gt;4)-Mur2Ac(oyl-L-Ala-gamma-D-Glu-L-Lys-D-Ala-D-Ala)-di-trans,octa-cis-undecaprenyl diphosphate = [GlcNAc-(1-&gt;4)-Mur2Ac(oyl-L-Ala-gamma-D-Glu-L-Lys-D-Ala-D-Ala)](n+1)-di-trans,octa-cis-undecaprenyl diphosphate + di-trans,octa-cis-undecaprenyl diphosphate + H(+). It functions in the pathway cell wall biogenesis; peptidoglycan biosynthesis. In terms of biological role, peptidoglycan polymerase that catalyzes glycan chain elongation from lipid-linked precursors. This Bordetella bronchiseptica (strain ATCC BAA-588 / NCTC 13252 / RB50) (Alcaligenes bronchisepticus) protein is Biosynthetic peptidoglycan transglycosylase.